The sequence spans 181 residues: Transcription termination/antitermination protein NusG (181 aa).

A KOW domain is found at 130-161 (PGEMIRVNDGPFADFNGVVEEVDYEKSRLKVS).

This sequence belongs to the NusG family. Monomer. Interacts with the transcription termination factor Rho and with RNA polymerase.

Participates in transcription elongation, termination and antitermination. In the absence of Rho, increases the rate of transcription elongation by the RNA polymerase (RNAP), probably by partially suppressing pausing. In the presence of Rho, modulates most Rho-dependent termination events by interacting with the RNAP to render the complex more susceptible to the termination activity of Rho. May be required to overcome a kinetic limitation of Rho to function at certain terminators. Also involved in ribosomal RNA transcriptional antitermination. This chain is Transcription termination/antitermination protein NusG, found in Buchnera aphidicola subsp. Acyrthosiphon pisum (strain APS) (Acyrthosiphon pisum symbiotic bacterium).